The chain runs to 415 residues: Protein ROH1A (415 aa).

The disordered stretch occupies residues 184 to 219; that stretch reads VSGGGGGGGGGNKTTERSWSFGRRSGGSSAASKGGA. Gly residues predominate over residues 185-195; it reads SGGGGGGGGGN. The segment covering 200 to 219 has biased composition (low complexity); sequence RSWSFGRRSGGSSAASKGGA. The chain crosses the membrane as a helical span at residues 263-283; the sequence is MFIMSTVMVFVMWVLTAAVPC.

It belongs to the ROH1 family. As to quaternary structure, interacts with EXO70A1 and EXO70C1. Binds to EXO70C2. As to expression, mainly expressed in cells expanding in a polar manner such as pollen and root hairs.

Its subcellular location is the membrane. The protein resides in the cytoplasm. The protein localises to the cytosol. Functionally, required for seed coat mucilage deposition. This is Protein ROH1A from Arabidopsis thaliana (Mouse-ear cress).